A 357-amino-acid chain; its full sequence is tRNA pseudouridine synthase B (357 aa).

D42 acts as the Nucleophile in catalysis.

The protein belongs to the pseudouridine synthase TruB family. Type 1 subfamily.

It catalyses the reaction uridine(55) in tRNA = pseudouridine(55) in tRNA. Functionally, responsible for synthesis of pseudouridine from uracil-55 in the psi GC loop of transfer RNAs. This Treponema denticola (strain ATCC 35405 / DSM 14222 / CIP 103919 / JCM 8153 / KCTC 15104) protein is tRNA pseudouridine synthase B.